Reading from the N-terminus, the 178-residue chain is Interleukin-10 (178 aa).

A signal peptide spans 1–18 (MHSSALLCCLVLLTGVRA). Disulfide bonds link Cys30-Cys126 and Cys80-Cys132. The N-linked (GlcNAc...) asparagine glycan is linked to Asn134.

Belongs to the IL-10 family. In terms of assembly, homodimer. Interacts with IL10RA and IL10RB.

Its subcellular location is the secreted. Its function is as follows. Major immune regulatory cytokine that acts on many cells of the immune system where it has profound anti-inflammatory functions, limiting excessive tissue disruption caused by inflammation. Mechanistically, IL10 binds to its heterotetrameric receptor comprising IL10RA and IL10RB leading to JAK1 and STAT2-mediated phosphorylation of STAT3. In turn, STAT3 translocates to the nucleus where it drives expression of anti-inflammatory mediators. Targets antigen-presenting cells (APCs) such as macrophages and monocytes and inhibits their release of pro-inflammatory cytokines including granulocyte-macrophage colony-stimulating factor /GM-CSF, granulocyte colony-stimulating factor/G-CSF, IL-1 alpha, IL-1 beta, IL-6, IL-8 and TNF-alpha. Also interferes with antigen presentation by reducing the expression of MHC-class II and co-stimulatory molecules, thereby inhibiting their ability to induce T cell activation. In addition, controls the inflammatory response of macrophages by reprogramming essential metabolic pathways including mTOR signaling. This chain is Interleukin-10 (IL10), found in Cercocebus atys (Sooty mangabey).